We begin with the raw amino-acid sequence, 573 residues long: Flagellin B (573 aa).

Belongs to the bacterial flagellin family. Heteromer of FlaA and FlaB. A flagellar filament composed exclusively of FlaA is indistinguishable in length from that of the wild-type and shows a slight reduction in motility. The flagellar filament composed exclusively of the FlaB is severely truncated in length and greatly reduced in motility. Thus, while both flagellins are not necessary for motility, both are required for a fully active flagellar filament.

Its subcellular location is the secreted. The protein localises to the bacterial flagellum. Flagellin is the subunit protein which polymerizes to form the filaments of bacterial flagella. The chain is Flagellin B (flaB) from Campylobacter coli.